A 506-amino-acid chain; its full sequence is MDTSTSFPSLFLPTLCTILISYIIIKYVLIWNRSSMAAFNLPPSPPKLPIIGNIHHVFSKNVNQTLWKLSKKYGPVMLIDTGAKSFLVVSSSQMAMEVLKTHQEILSTRPSNEGTKRLSYNFSDITFSPHGDHWRDMRKVFVNEFLGPKRAGWFNQVLRMEIKDVINNLSSNPLNTSINLNEMLLSLVYRVVCKFAFGKSYREEPFNGVTLKEMLDESMVVLAGSSADMFPTFGWILDKLYGWNDRLEKCFGNLDGFFEMIINEHLQSASETSEDEKDFVHSLVELSLKDPQFTKDYIKALLLNVLLGAIDTTFTTIVWAMSEIVKNTQVMQKLQTEIRSCIGRKEEVDATDLTNMAYLKMVIKETLRLHPPAPLLFPRECPSHCKIGGYDVFPGTCVVMNGWGIARDPNVWKEIPNEFYPERFENFNIDFLGNHCEMIPFGAGRRSCPGMKSATSTIEFTLVNLLYWFDWEVPSGMNNQDLDMEEDGFLVIQKKSPLFLIPIKHI.

Residues 10–30 (LFLPTLCTILISYIIIKYVLI) traverse the membrane as a helical segment. Asparagine 32, asparagine 63, asparagine 121, asparagine 168, and asparagine 175 each carry an N-linked (GlcNAc...) asparagine glycan. Residues 301–321 (LLLNVLLGAIDTTFTTIVWAM) form a helical membrane-spanning segment. Cysteine 448 contributes to the heme binding site.

Belongs to the cytochrome P450 family.

It is found in the membrane. It carries out the reaction (+)-costunolide + reduced [NADPH--hemoprotein reductase] + O2 = parthenolide + oxidized [NADPH--hemoprotein reductase] + H2O + H(+). It participates in secondary metabolite biosynthesis; terpenoid biosynthesis. Its function is as follows. Involved in the biosynthesis of germacrene-derived sesquiterpene lactones. Component of the parthenolide biosynthetic pathway; parthenolide and conjugates are promising anti-cancer drugs highly active against colon cancer cells. Catalyzes the conversion of costunolide to parthenolide. The protein is Parthenolide synthase of Tanacetum parthenium (Feverfew).